The sequence spans 409 residues: Elongation factor Tu (409 aa).

Residues 10 to 214 (KPHVNVGTIG…AVDSYIPTPE (205 aa)) enclose the tr-type G domain. The tract at residues 19–26 (GHVDHGKT) is G1. Residue 19–26 (GHVDHGKT) participates in GTP binding. Residue Thr26 coordinates Mg(2+). Residues 60–64 (GITIN) form a G2 region. The G3 stretch occupies residues 81-84 (DCPG). Residues 81–85 (DCPGH) and 136–139 (NKAD) contribute to the GTP site. The segment at 136-139 (NKAD) is G4. The interval 174 to 176 (SAL) is G5.

This sequence belongs to the TRAFAC class translation factor GTPase superfamily. Classic translation factor GTPase family. EF-Tu/EF-1A subfamily. Monomer.

It localises to the cytoplasm. It carries out the reaction GTP + H2O = GDP + phosphate + H(+). GTP hydrolase that promotes the GTP-dependent binding of aminoacyl-tRNA to the A-site of ribosomes during protein biosynthesis. This chain is Elongation factor Tu, found in Synechococcus sp. (strain JA-2-3B'a(2-13)) (Cyanobacteria bacterium Yellowstone B-Prime).